The primary structure comprises 183 residues: Dual-action ribosomal maturation protein DarP (183 aa).

The disordered stretch occupies residues 1 to 23; it reads MTKQPDDWLDEVPDNENDDDDDE. Residues 7–23 show a composition bias toward acidic residues; the sequence is DWLDEVPDNENDDDDDE.

Belongs to the DarP family.

Its subcellular location is the cytoplasm. In terms of biological role, member of a network of 50S ribosomal subunit biogenesis factors which assembles along the 30S-50S interface, preventing incorrect 23S rRNA structures from forming. Promotes peptidyl transferase center (PTC) maturation. The protein is Dual-action ribosomal maturation protein DarP of Cronobacter sakazakii (strain ATCC BAA-894) (Enterobacter sakazakii).